The following is a 122-amino-acid chain: Probable non-specific lipid-transfer protein 3 (122 aa).

A signal peptide spans 1-29; the sequence is MARLNSKAVAAAVVLAAVVLMMAGREASA. 4 disulfides stabilise this stretch: Cys-33–Cys-81, Cys-43–Cys-58, Cys-59–Cys-104, and Cys-79–Cys-118.

It belongs to the plant LTP family. As to expression, expressed in phloem. Also detected in the epidermis near the vascular tissues in resistant plants infected by Hessian fly larvae.

Functionally, plant non-specific lipid-transfer proteins transfer phospholipids as well as galactolipids across membranes. May play a role in wax or cutin deposition in the cell walls of expanding epidermal cells and certain secretory tissues. The protein is Probable non-specific lipid-transfer protein 3 (LTP3) of Triticum aestivum (Wheat).